The primary structure comprises 833 residues: Vacuolar protein sorting-associated protein 16 homolog (833 aa).

The protein belongs to the VPS16 family. As to quaternary structure, component of the homotypic fusion and vacuole protein sorting (HOPS) complex, composed of Vps16A, car/Vps33A, dor/Vps18, Vps39, Vps11 and lt/Vps41. Interacts with Syx17 (via SNARE domain); the interaction may involve multiple components of the HOPS complex and may promote assembly of the Syx17-Snap29-Vamp7 trans-SNARE complex. Component of the class C core vacuole/endosome tethering (CORVET) complex composed of at least Vps8, dor/Vps18, car/Vps33A and Vps16A; unlike in other species, Vps11 is not part of the Drosophila complex. Due to the reduced number of components the Drosophila CORVET complex is often referred to as the miniCORVET complex. The tethering complex core made up of Vps16A, car/Vps33A and dor/Vps18 and shared by both HOPS and CORVET, preferentially associates with CORVET-specific Vps8 over HOPS-specific lt/Vps41. Interacts with Rab2 (GTP-bound form).

The protein localises to the late endosome membrane. Its subcellular location is the lysosome membrane. It localises to the cytoplasmic vesicle. It is found in the autophagosome. Functionally, core component of the class C core vacuole/endosome tethering (CORVET) and the homotypic fusion and vacuole protein sorting (HOPS) tethering complexes involved in endo-lysosomal vesicle trafficking and lysosome biogenesis. The CORVET complex facilitates docking and fusion of endosomal vesicles during endosome maturation, acts upstream of HOPS, but is not involved in autophagic flux. The CORVET complex may cooperate with the early endosomal tether Rbsn-5 to mediate endosomal fusion. The HOPS complex facilitates docking and fusion of lysosomes with late endosomes and several other types of vesicles. The HOPS complex is also involved in autophagy and crinophagy (the elimination of unused secretory granules through their fusion with lysosomes). The HOPS complex mediates autophagocitic flux, probably by binding autophagosome-associated Syx17/syntaxin 17, promoting assembly of the trans-SNARE complex and instigating autophagosome-lysosome fusion. Independent of Syx17/syntaxin 17, HOPS is involved in biosynthetic transport to lysosomes and lysosome-related organelles such as eye-pigment granules. Required for endocytic degradation of boss/bride of sevenless and N/Notch in developing ommatidia. This chain is Vacuolar protein sorting-associated protein 16 homolog, found in Drosophila melanogaster (Fruit fly).